A 45-amino-acid chain; its full sequence is MSQTPVATTPRNYPIFTVRWLALHTLGVPTVFFLGALAAMQFIRR.

Residues 20–36 traverse the membrane as a helical segment; sequence WLALHTLGVPTVFFLGA. His24 contacts heme.

Belongs to the PsbE/PsbF family. As to quaternary structure, heterodimer of an alpha subunit and a beta subunit. PSII is composed of 1 copy each of membrane proteins PsbA, PsbB, PsbC, PsbD, PsbE, PsbF, PsbH, PsbI, PsbJ, PsbK, PsbL, PsbM, PsbT, PsbX, PsbY, PsbZ, Psb30/Ycf12, peripheral proteins PsbO, CyanoQ (PsbQ), PsbU, PsbV and a large number of cofactors. It forms dimeric complexes. Heme b serves as cofactor.

Its subcellular location is the cellular thylakoid membrane. Its function is as follows. This b-type cytochrome is tightly associated with the reaction center of photosystem II (PSII). PSII is a light-driven water:plastoquinone oxidoreductase that uses light energy to abstract electrons from H(2)O, generating O(2) and a proton gradient subsequently used for ATP formation. It consists of a core antenna complex that captures photons, and an electron transfer chain that converts photonic excitation into a charge separation. This chain is Cytochrome b559 subunit beta, found in Parasynechococcus marenigrum (strain WH8102).